The chain runs to 599 residues: Kelch-like protein 41a (599 aa).

Residues 32–102 enclose the BTB domain; that stretch reads VDCILKVGDR…LYSADIDITD (71 aa). The BACK domain maps to 137-239; sequence CLAIFRMGLV…PEKYLKEKVE (103 aa). Kelch repeat units lie at residues 339–391, 393–440, 441–488, 489–535, and 537–591; these read LLYV…EFEN, LFAV…SQNG, LVYC…VHKG, KIVV…SVDG, and LYAV…SMRL.

Its subcellular location is the cytoplasm. The protein resides in the cytoskeleton. It is found in the sarcoplasmic reticulum membrane. It localises to the endoplasmic reticulum membrane. Functionally, involved in skeletal muscle development and differentiation. The sequence is that of Kelch-like protein 41a (klhl41a) from Danio rerio (Zebrafish).